The chain runs to 95 residues: Large ribosomal subunit protein bL25 (95 aa).

This sequence belongs to the bacterial ribosomal protein bL25 family. As to quaternary structure, part of the 50S ribosomal subunit; part of the 5S rRNA/L5/L18/L25 subcomplex. Contacts the 5S rRNA. Binds to the 5S rRNA independently of L5 and L18.

This is one of the proteins that binds to the 5S RNA in the ribosome where it forms part of the central protuberance. This Shewanella sediminis (strain HAW-EB3) protein is Large ribosomal subunit protein bL25.